The primary structure comprises 231 residues: Ion-translocating oxidoreductase complex subunit E (231 aa).

A run of 6 helical transmembrane segments spans residues 18 to 38 (ALVQ…ATNA), 39 to 59 (LGLG…ISTL), 63 to 83 (TPAE…VSAV), 86 to 106 (LINA…PLIV), 125 to 145 (ALSA…MFVL), and 182 to 202 (PFLL…MLAG).

Belongs to the NqrDE/RnfAE family. As to quaternary structure, the complex is composed of six subunits: RsxA, RsxB, RsxC, RsxD, RsxE and RsxG.

It is found in the cell inner membrane. In terms of biological role, part of a membrane-bound complex that couples electron transfer with translocation of ions across the membrane. Required to maintain the reduced state of SoxR. The chain is Ion-translocating oxidoreductase complex subunit E from Escherichia coli O127:H6 (strain E2348/69 / EPEC).